The primary structure comprises 577 residues: Pyruvate decarboxylase (577 aa).

Residues Asp30 and His116 each coordinate substrate. A thiamine pyrophosphate binding region spans residues 388–482 (TPGYGVNDFI…FLINNDGYTI (95 aa)). 3 residues coordinate Mg(2+): Asp450, Asn477, and Gly479. Substrate is bound at residue Glu483.

This sequence belongs to the TPP enzyme family. Homotetramer. A metal cation serves as cofactor. The cofactor is thiamine diphosphate.

It catalyses the reaction a 2-oxocarboxylate + H(+) = an aldehyde + CO2. This Aspergillus parasiticus protein is Pyruvate decarboxylase (pdcA).